The chain runs to 376 residues: MSLSPTLELAKDLIRRQSVTPDDAGCQELMMSRLAPLGFSGENLRFGETDNLWARKGNNGPVLAFAGHTDVVPTGPEKNWAHPPFDPIIKDGYLHGRGAADMKGSLAAFITACERFVANHPNHRGSIALLITSDEEGPAQDGTVKVVETLEARNEKMDWCLIGEPSSTHQVGDVIKNGRRGSLHGYLTVRGVQGHVAYPHLAENAVHNVAPALDALAKEFWDNGNDFFPPTTFQITRVEAGVGSNIVPGECLVHFNFRYCTENTAESLEERVVAILDRHNLKYDLQWHLSGRPFLTDKGALVSAAQNAIRTVTGRETELSTSGGTSDGRFIAPTGAQVVELGPINATIHKVDECVKAEDLDTLSEIYEQILVELLA.

Position 68 (H68) interacts with Zn(2+). The active site involves D70. Residue D101 participates in Zn(2+) binding. Catalysis depends on E135, which acts as the Proton acceptor. 3 residues coordinate Zn(2+): E136, E164, and H349.

Belongs to the peptidase M20A family. DapE subfamily. Homodimer. It depends on Zn(2+) as a cofactor. Co(2+) is required as a cofactor.

The enzyme catalyses N-succinyl-(2S,6S)-2,6-diaminopimelate + H2O = (2S,6S)-2,6-diaminopimelate + succinate. The protein operates within amino-acid biosynthesis; L-lysine biosynthesis via DAP pathway; LL-2,6-diaminopimelate from (S)-tetrahydrodipicolinate (succinylase route): step 3/3. In terms of biological role, catalyzes the hydrolysis of N-succinyl-L,L-diaminopimelic acid (SDAP), forming succinate and LL-2,6-diaminopimelate (DAP), an intermediate involved in the bacterial biosynthesis of lysine and meso-diaminopimelic acid, an essential component of bacterial cell walls. In Marinobacter nauticus (strain ATCC 700491 / DSM 11845 / VT8) (Marinobacter aquaeolei), this protein is Succinyl-diaminopimelate desuccinylase.